The primary structure comprises 721 residues: uncharacterized protein (721 aa).

Disordered stretches follow at residues Thr-196–Pro-291 and Ala-370–Gln-513. Low complexity-rich tracts occupy residues Ser-202 to Pro-224 and Ser-232 to Pro-250. Pro residues-rich tracts occupy residues Pro-264–Ala-283 and Ala-379–Pro-389. A compositionally biased stretch (low complexity) spans Ala-419–Ala-429. Residues Val-435 to Thr-446 show a composition bias toward pro residues. A compositionally biased stretch (polar residues) spans Val-470–Ser-484. The span at Ala-491–Asp-505 shows a compositional bias: low complexity.

This is an uncharacterized protein from Mycobacterium tuberculosis (strain ATCC 25618 / H37Rv).